We begin with the raw amino-acid sequence, 412 residues long: UV DNA damage endonuclease (412 aa).

It belongs to the uve1/UvsE family.

Functionally, component in a DNA repair pathway. Removal of UV LIGHT damaged nucleotides. Recognizes pyrimidine dimers and cleave a phosphodiester bond immediately 5' to the lesion. The chain is UV DNA damage endonuclease from Clostridium perfringens (strain 13 / Type A).